Here is an 823-residue protein sequence, read N- to C-terminus: Lon protease (823 aa).

Positions 51-246 (IPILPLRNMV…RLLFILNREY (196 aa)) constitute a Lon N-terminal domain. Residue 397–404 (GPPGVGKT) participates in ATP binding. Residues 633–815 (NDYAGVVTGL…QQVVDLALLR (183 aa)) form the Lon proteolytic domain. Active-site residues include S721 and K764.

It belongs to the peptidase S16 family. As to quaternary structure, homohexamer. Organized in a ring with a central cavity.

It localises to the cytoplasm. It catalyses the reaction Hydrolysis of proteins in presence of ATP.. Its function is as follows. ATP-dependent serine protease that mediates the selective degradation of mutant and abnormal proteins as well as certain short-lived regulatory proteins. Required for cellular homeostasis and for survival from DNA damage and developmental changes induced by stress. Degrades polypeptides processively to yield small peptide fragments that are 5 to 10 amino acids long. Binds to DNA in a double-stranded, site-specific manner. In Parabacteroides distasonis (strain ATCC 8503 / DSM 20701 / CIP 104284 / JCM 5825 / NCTC 11152), this protein is Lon protease.